The chain runs to 1368 residues: DNA-directed RNA polymerase subunit beta (1368 aa).

It belongs to the RNA polymerase beta chain family. In terms of assembly, the RNAP catalytic core consists of 2 alpha, 1 beta, 1 beta' and 1 omega subunit. When a sigma factor is associated with the core the holoenzyme is formed, which can initiate transcription.

The catalysed reaction is RNA(n) + a ribonucleoside 5'-triphosphate = RNA(n+1) + diphosphate. DNA-dependent RNA polymerase catalyzes the transcription of DNA into RNA using the four ribonucleoside triphosphates as substrates. This chain is DNA-directed RNA polymerase subunit beta, found in Burkholderia cenocepacia (strain ATCC BAA-245 / DSM 16553 / LMG 16656 / NCTC 13227 / J2315 / CF5610) (Burkholderia cepacia (strain J2315)).